A 336-amino-acid polypeptide reads, in one-letter code: Pyridoxal 5'-phosphate synthase subunit PdxS (336 aa).

Residue aspartate 33 coordinates D-ribose 5-phosphate. Lysine 90 acts as the Schiff-base intermediate with D-ribose 5-phosphate in catalysis. Glycine 162 is a D-ribose 5-phosphate binding site. Arginine 174 lines the D-glyceraldehyde 3-phosphate pocket. D-ribose 5-phosphate contacts are provided by residues glycine 260 and 281–282 (GS).

The protein belongs to the PdxS/SNZ family. In terms of assembly, in the presence of PdxT, forms a dodecamer of heterodimers.

The catalysed reaction is aldehydo-D-ribose 5-phosphate + D-glyceraldehyde 3-phosphate + L-glutamine = pyridoxal 5'-phosphate + L-glutamate + phosphate + 3 H2O + H(+). It functions in the pathway cofactor biosynthesis; pyridoxal 5'-phosphate biosynthesis. Its function is as follows. Catalyzes the formation of pyridoxal 5'-phosphate from ribose 5-phosphate (RBP), glyceraldehyde 3-phosphate (G3P) and ammonia. The ammonia is provided by the PdxT subunit. Can also use ribulose 5-phosphate and dihydroxyacetone phosphate as substrates, resulting from enzyme-catalyzed isomerization of RBP and G3P, respectively. This Picrophilus torridus (strain ATCC 700027 / DSM 9790 / JCM 10055 / NBRC 100828 / KAW 2/3) protein is Pyridoxal 5'-phosphate synthase subunit PdxS.